A 411-amino-acid polypeptide reads, in one-letter code: Heterogeneous nuclear ribonucleoprotein 1 (411 aa).

One can recognise an RRM 1 domain in the interval 6–82; that stretch reads GKLFVGGISW…REVDVKRAMS (77 aa). Disordered stretches follow at residues 81–103, 183–221, and 358–411; these read MSREEQQVSGRTGNLNTSRSSGG, KRALPKDANPGGGGRSMGGGGSGGYQGYGGNESSYDGRM, and AAYG…RQGQ. Polar residues predominate over residues 87–101; it reads QVSGRTGNLNTSRSS. One can recognise an RRM 2 domain in the interval 110-187; that stretch reads KKIFVGGLPP…KQVEVKRALP (78 aa). 3 stretches are compositionally biased toward gly residues: residues 192–212, 362–387, and 397–411; these read PGGGGRSMGGGGSGGYQGYGG, VVGGRPSGGGSNNPGSGGYMGGGYGD, and GYGGGYNDGQGRQGQ. The tract at residues 341 to 390 is nuclear targeting sequence (M9); it reads GYGYGGYSGSDSGYGNQAAYGVVGGRPSGGGSNNPGSGGYMGGGYGDGSW.

In terms of assembly, component of the spliceosome. Interacts with TRN1.

It localises to the nucleus. The protein resides in the cytoplasm. Its function is as follows. Involved with pre-mRNA processing. Forms complexes (ribonucleosomes) with at least 20 other different hnRNP and heterogeneous nuclear RNA in the nucleus. Functionally, involved in the packaging of pre-mRNA into hnRNP particles, transport of poly(A) mRNA from the nucleus to the cytoplasm and may modulate splice site selection. In Arabidopsis thaliana (Mouse-ear cress), this protein is Heterogeneous nuclear ribonucleoprotein 1 (RNP1).